Reading from the N-terminus, the 437-residue chain is 26S proteasome subunit RPT4 (437 aa).

The tract at residues 1–51 (MSEEQDPLLAGLGETSGDNHTQQSHEQQPEQPQETEEHHEEEPSRVDPEQE) is disordered. S2 carries the N-acetylserine modification. Residues 20–32 (HTQQSHEQQPEQP) show a composition bias toward low complexity. Positions 35-51 (TEEHHEEEPSRVDPEQE) are enriched in basic and acidic residues. Residue 222–229 (GPPGTGKT) coordinates ATP.

The protein belongs to the AAA ATPase family. In terms of processing, N-acetylated by NAT1.

Its function is as follows. The 26S proteasome is involved in the ATP-dependent degradation of ubiquitinated proteins. The regulatory (or ATPase) complex confers ATP dependency and substrate specificity to the 26S complex. The sequence is that of 26S proteasome subunit RPT4 (RPT4) from Saccharomyces cerevisiae (strain ATCC 204508 / S288c) (Baker's yeast).